The sequence spans 531 residues: Pancreatic secretory granule membrane major glycoprotein GP2 (531 aa).

Residues 1-21 form the signal peptide; the sequence is MVGCDLLWLAAASCVLTLVSP. Asn33 carries N-linked (GlcNAc...) asparagine glycosylation. Residues 34–53 form a beta hairpin region; sequence SSNLDLDCGSPDSPSSGICF. 11 cysteine pairs are disulfide-bonded: Cys41–Cys52, Cys56–Cys151, Cys79–Cys169, Cys101–Cys139, Cys107–Cys174, Cys132–Cys140, Cys184–Cys194, Cys188–Cys203, Cys205–Cys235, Cys223–Cys314, and Cys255–Cys278. The D10C stretch occupies residues 54–74; it reads DPCQNHTVLNDPTRSTENNDS. Asn58 and Asn72 each carry an N-linked (GlcNAc...) asparagine glycan. Positions 180–224 constitute an EGF-like domain; the sequence is APKNCEITCRPEEECVFQNNNWSCVCRQDLHVSDSQSLQPLLDCG. A glycan (N-linked (GlcNAc...) asparagine) is linked at Asn200. The segment at 222-315 is ZP-N; it reads DCGDNEIKVK…FRVNVNFQCA (94 aa). A ZP domain is found at 222–478; sequence DCGDNEIKVK…PSCSTNRLRS (257 aa). Residues Asn256 and Asn285 are each glycosylated (N-linked (GlcNAc...) asparagine). The interval 316-339 is flexible ZP-N/ZP-C linker; sequence YPLDMSVSLETALQPIVSSLTVDV. Positions 340–351 are internal hydrophobic patch (IHP); that stretch reads DGAGEFNVKMAL. A ZP-C region spans residues 340 to 478; it reads DGAGEFNVKM…PSCSTNRLRS (139 aa). 3 disulfide bridges follow: Cys395–Cys455, Cys416–Cys471, and Cys460–Cys467. Residues 485 to 493 form an external hydrophobic patch (EHP) region; the sequence is YNRVLDLGP.

Interacts with SYCN. Interacts with bacterial adhesin fimH. N-glycosylated. Specifically expressed by M (microfold) cells which are atypical epithelial cells of the intestine.

It is found in the zymogen granule membrane. The protein localises to the secreted. It localises to the cell membrane. Its subcellular location is the apical cell membrane. The protein resides in the membrane raft. It is found in the endosome. Its function is as follows. Functions as an intestinal M-cell transcytotic receptor specific of type-I-piliated bacteria that participates in the mucosal immune response toward these bacteria. At the apical membrane of M-cells it binds fimH, a protein of the bacteria type I pilus tip. Internalizes bound bacteria, like E.coli and S.typhimurium, from the lumen of the intestine and delivers them, through M-cells, to the underlying organized lymphoid follicles where they are captured by antigen-presenting dendritic cells to elicit a mucosal immune response. The polypeptide is Pancreatic secretory granule membrane major glycoprotein GP2 (Mus musculus (Mouse)).